Reading from the N-terminus, the 212-residue chain is uncharacterized protein (212 aa).

Positions 1–18 (MQLTQVLAVAILAAGVSA) are cleaved as a signal peptide. The interval 108-180 (VSHNRVNAKQ…KDYGHKDYGH (73 aa)) is disordered. Residues 117-180 (QRRDDKKDYG…KDYGHKDYGH (64 aa)) show a composition bias toward basic and acidic residues. Positions 120–210 (DDKKDYGKND…KDYGYKGYDD (91 aa)) are 15 X 5 AA tandem repeats of K-D-Y-G-H. The stretch at 123 to 127 (KDYGK) is repeat 1. A 2; truncated repeat occupies 128 to 132 (NDYGK). Tandem repeats lie at residues 133 to 137 (KDYGK), 138 to 142 (KDYGK), and 143 to 147 (KDYGK). One copy of the 6; truncated repeat lies at 148-152 (KEYDP). 5 tandem repeats follow at residues 166 to 170 (KDYGH), 171 to 175 (KDYGH), 176 to 180 (KDYGH), 181 to 185 (KDYGH), and 186 to 190 (KDYGH). One copy of the 12; truncated repeat lies at 191–195 (DDYGY). A 13; truncated repeat occupies 196-200 (KGYDD). The stretch at 201 to 205 (KDYGY) is one 14; truncated repeat. The 15; truncated repeat unit spans residues 206–210 (KGYDD).

Its subcellular location is the secreted. This is an uncharacterized protein from Arthroderma benhamiae (strain ATCC MYA-4681 / CBS 112371) (Trichophyton mentagrophytes).